The following is a 687-amino-acid chain: Chloride channel protein ClC-Kb (687 aa).

The Cytoplasmic segment spans residues 1–50 (MEEFVGLREGSSGNPVTLQELWGPCPRIRRGIRGGLEWLKQKLFRLGEDW). 2 helical membrane-spanning segments follow: residues 51 to 82 (YFLMTLGVLMALVSCAMDLAVESVVRAHQWLY) and 91 to 111 (LRYLSWTVYPVALVSFSSGFS). The segment at residues 116–127 (PSSGGSGIPEVK) is an intramembrane region (helical). Ser121 is a chloride binding site. A run of 2 helical transmembrane segments spans residues 141–160 (IKNFGAKVVGLSCTLACGST) and 161–180 (LFLGKVGPFVHLSVMMAAYL). An N-linked (GlcNAc...) asparagine glycan is attached at Asn193. Residues 203-224 (AAAAVGVATVFAAPFSGVLFSI) constitute an intramembrane region (helical). A helical transmembrane segment spans residues 236-255 (YWRGFFAATCGAFMFRLLAV). Ca(2+) contacts are provided by Glu259, Glu261, Asp278, and Glu281. The next 2 membrane-spanning stretches (helical) occupy residues 282–310 (IFFFVALGGLCGILGSAYLFCQRIFFGFI) and 325–342 (PVYSALATLVLASITYPP). The segment at residues 349 to 360 (ASRLSMKQHLDS) is an intramembrane region (helical). 2 helical membrane-spanning segments follow: residues 400 to 420 (GTLAFFLVMKFWMLILATTIP) and 421 to 440 (MPAGYFMPIFVYGAAIGRLF). Phe426 contacts chloride. The helical intramembrane region spans 464 to 496 (GGYALAGAAAFSGAVTHTISTALLAFEVTGQIV). Residues 500–520 (PVLMAVLAANAIAQSCQPSFY) form a helical membrane-spanning segment. Over 521-687 (DGTVIVKKLP…SNLTNPPAPK (167 aa)) the chain is Cytoplasmic. CBS domains follow at residues 551–609 (MNHS…EPPS) and 626–684 (CPTE…TNPP).

It belongs to the chloride channel (TC 2.A.49) family. CLCNKB subfamily. Homodimer. Interacts with BSND. N-glycosylated.

Its subcellular location is the basolateral cell membrane. It carries out the reaction chloride(in) = chloride(out). It catalyses the reaction iodide(out) = iodide(in). The enzyme catalyses nitrate(in) = nitrate(out). The catalysed reaction is bromide(in) = bromide(out). Activated by extracellular Ca(2+) and inhibited by extracellular acidic pH. Anion-selective channel permeable to small monovalent anions with ion selectivity for chloride &gt; bromide &gt; nitrate &gt; iodide. Forms a homodimeric channel where each subunit has its own ion conduction pathway. May conduct double-barreled currents controlled by two types of gates, two fast gates that control each subunit independently and a slow common gate that opens and shuts off both subunits simultaneously. Assembles with the regulatory subunit BSND/Barttin for sorting at the basolateral plasma membrane domain and functional switch to the ion conducting state. CLCNKB:BSND channels display mostly a linear current-voltage relationship controlled by common gate. Mediates chloride conductance along nephron segments, namely the thick ascending limb of Henle's loop, convoluted tubule and the collecting duct, contributing to the maintenance of systemic acid-base and electrolyte homeostasis. Conducts chloride currents in the stria vascularis of the inner ear to establish the endocochlear potential necessary for normal hearing. The polypeptide is Chloride channel protein ClC-Kb (Homo sapiens (Human)).